The primary structure comprises 231 residues: Putative N-acetylmannosamine-6-phosphate 2-epimerase (231 aa).

The protein belongs to the NanE family.

The enzyme catalyses an N-acyl-D-glucosamine 6-phosphate = an N-acyl-D-mannosamine 6-phosphate. The protein operates within amino-sugar metabolism; N-acetylneuraminate degradation; D-fructose 6-phosphate from N-acetylneuraminate: step 3/5. In terms of biological role, converts N-acetylmannosamine-6-phosphate (ManNAc-6-P) to N-acetylglucosamine-6-phosphate (GlcNAc-6-P). This is Putative N-acetylmannosamine-6-phosphate 2-epimerase from Listeria monocytogenes serotype 4b (strain CLIP80459).